A 98-amino-acid polypeptide reads, in one-letter code: NADH-ubiquinone oxidoreductase chain 4L (98 aa).

Transmembrane regions (helical) follow at residues 26 to 46 (LVAS…MATL) and 61 to 81 (IILL…LISI).

The protein belongs to the complex I subunit 4L family. As to quaternary structure, core subunit of respiratory chain NADH dehydrogenase (Complex I) which is composed of 45 different subunits.

The protein resides in the mitochondrion inner membrane. The enzyme catalyses a ubiquinone + NADH + 5 H(+)(in) = a ubiquinol + NAD(+) + 4 H(+)(out). In terms of biological role, core subunit of the mitochondrial membrane respiratory chain NADH dehydrogenase (Complex I) which catalyzes electron transfer from NADH through the respiratory chain, using ubiquinone as an electron acceptor. Part of the enzyme membrane arm which is embedded in the lipid bilayer and involved in proton translocation. This chain is NADH-ubiquinone oxidoreductase chain 4L (MT-ND4L), found in Macaca nigrescens (Gorontalo macaque).